We begin with the raw amino-acid sequence, 346 residues long: 3 beta-hydroxysteroid dehydrogenase/Delta 5--&gt;4-isomerase (346 aa).

Residue Tyr147 is the Proton acceptor of the active site. Lys151 is an NAD(+) binding site.

Belongs to the 3-beta-HSD family.

It carries out the reaction a 3beta-hydroxy-Delta(5)-steroid + NAD(+) = a 3-oxo-Delta(5)-steroid + NADH + H(+). It catalyses the reaction a 3-oxo-Delta(5)-steroid = a 3-oxo-Delta(4)-steroid. Its pathway is lipid metabolism; steroid biosynthesis. Catalyzes the oxidative conversion of Delta(5)-ene-3-beta-hydroxy steroid, and the oxidative conversion of ketosteroids. The 3-beta-HSD enzymatic system plays a crucial role in the biosynthesis of all classes of hormonal steroids. During viral infection, steroid production contributes to virulence by inhibiting the host inflammatory response. This is 3 beta-hydroxysteroid dehydrogenase/Delta 5--&gt;4-isomerase (OPG174) from Homo sapiens (Human).